Here is a 416-residue protein sequence, read N- to C-terminus: Enolase (416 aa).

Gln-156 contacts (2R)-2-phosphoglycerate. Glu-200 serves as the catalytic Proton donor. Asp-236, Glu-281, and Asp-308 together coordinate Mg(2+). Lys-333, Arg-362, Ser-363, and Lys-384 together coordinate (2R)-2-phosphoglycerate. The active-site Proton acceptor is the Lys-333.

It belongs to the enolase family. Requires Mg(2+) as cofactor.

The protein resides in the cytoplasm. The protein localises to the secreted. It is found in the cell surface. The enzyme catalyses (2R)-2-phosphoglycerate = phosphoenolpyruvate + H2O. It functions in the pathway carbohydrate degradation; glycolysis; pyruvate from D-glyceraldehyde 3-phosphate: step 4/5. Its function is as follows. Catalyzes the reversible conversion of 2-phosphoglycerate (2-PG) into phosphoenolpyruvate (PEP). It is essential for the degradation of carbohydrates via glycolysis. This Methanothermobacter thermautotrophicus (strain ATCC 29096 / DSM 1053 / JCM 10044 / NBRC 100330 / Delta H) (Methanobacterium thermoautotrophicum) protein is Enolase.